A 377-amino-acid chain; its full sequence is Chaperone protein DnaJ (377 aa).

Residues 5–69 (EYYDRLGLSK…QKRAAYDQYG (65 aa)) form the J domain. The segment at 133–215 (GAEKEIHYNR…CHGTGREKQS (83 aa)) adopts a CR-type zinc-finger fold. 8 residues coordinate Zn(2+): Cys-146, Cys-149, Cys-163, Cys-166, Cys-189, Cys-192, Cys-203, and Cys-206. CXXCXGXG motif repeat units follow at residues 146-153 (CKTCSGSG), 163-170 (CGRCHGHG), 189-196 (CDVCHGTG), and 203-210 (CQTCHGTG).

This sequence belongs to the DnaJ family. Homodimer. It depends on Zn(2+) as a cofactor.

It is found in the cytoplasm. Participates actively in the response to hyperosmotic and heat shock by preventing the aggregation of stress-denatured proteins and by disaggregating proteins, also in an autonomous, DnaK-independent fashion. Unfolded proteins bind initially to DnaJ; upon interaction with the DnaJ-bound protein, DnaK hydrolyzes its bound ATP, resulting in the formation of a stable complex. GrpE releases ADP from DnaK; ATP binding to DnaK triggers the release of the substrate protein, thus completing the reaction cycle. Several rounds of ATP-dependent interactions between DnaJ, DnaK and GrpE are required for fully efficient folding. Also involved, together with DnaK and GrpE, in the DNA replication of plasmids through activation of initiation proteins. The protein is Chaperone protein DnaJ of Streptococcus thermophilus (strain CNRZ 1066).